A 156-amino-acid polypeptide reads, in one-letter code: MGKDRNLSLNSPESIQSVIGDTDIKIAVIAAMWHEKIVRGLIDGATREIVSSGSHAELFRVPGSVELVLACKKLLKTFDAAVALGVILRGETDHNTHIARLVLSGITDVMLALEKPIGIGVLTIDTEQQGLDRSSGDYNAGVNAARAVIRMVRLFR.

5-amino-6-(D-ribitylamino)uracil-binding positions include W33, 64–66 (SVE), and 86–88 (VIL). (2S)-2-hydroxy-3-oxobutyl phosphate is bound at residue 91–92 (ET). The active-site Proton donor is H94. A 5-amino-6-(D-ribitylamino)uracil-binding site is contributed by I119. R133 contributes to the (2S)-2-hydroxy-3-oxobutyl phosphate binding site.

Belongs to the DMRL synthase family.

The enzyme catalyses (2S)-2-hydroxy-3-oxobutyl phosphate + 5-amino-6-(D-ribitylamino)uracil = 6,7-dimethyl-8-(1-D-ribityl)lumazine + phosphate + 2 H2O + H(+). Its pathway is cofactor biosynthesis; riboflavin biosynthesis; riboflavin from 2-hydroxy-3-oxobutyl phosphate and 5-amino-6-(D-ribitylamino)uracil: step 1/2. Functionally, catalyzes the formation of 6,7-dimethyl-8-ribityllumazine by condensation of 5-amino-6-(D-ribitylamino)uracil with 3,4-dihydroxy-2-butanone 4-phosphate. This is the penultimate step in the biosynthesis of riboflavin. The protein is 6,7-dimethyl-8-ribityllumazine synthase of Tropheryma whipplei (strain TW08/27) (Whipple's bacillus).